We begin with the raw amino-acid sequence, 102 residues long: Carboxysome shell protein CcmK3 (102 aa).

The BMC domain maps to 4-90 (AVGVIQTDGF…PPDNVETVMP (87 aa)).

The protein belongs to the bacterial microcompartments protein family. CcmK subfamily. As to quaternary structure, interacts stably with CcmK4, forming heterohexamers that can make dodecamers. Heterohexamers have a 1:2 CcmK3:CcmK4 stoichiometry. Upon expression in E.coli forms oligomers that could be dimers or trimers, but never hexamers; bulky residues in the pore region probably preclude the formation of homohexamers.

It localises to the carboxysome. Its function is as follows. A probably non-essential, minor shell protein of the carboxysome, a polyhedral inclusion where RuBisCO (ribulose bisphosphate carboxylase, rbcL-rbcS) is sequestered. Hexamers form sheets that form the facets of the polyhedral carboxysome. In PCC 7418 there are several CcmK paralogs with presumably functional differences. This subunit probably only makes heterohexamers with CcmK4. Heterohexamers can also make dodecamers, formation depends on buffer conditions. The sequence is that of Carboxysome shell protein CcmK3 from Halothece sp. (strain PCC 7418) (Synechococcus sp. (strain PCC 7418)).